A 384-amino-acid chain; its full sequence is UDP-4-amino-4-deoxy-L-arabinose--oxoglutarate aminotransferase (384 aa).

Residue lysine 182 is modified to N6-(pyridoxal phosphate)lysine.

This sequence belongs to the DegT/DnrJ/EryC1 family. ArnB subfamily. As to quaternary structure, homodimer. Pyridoxal 5'-phosphate serves as cofactor.

It carries out the reaction UDP-4-amino-4-deoxy-beta-L-arabinose + 2-oxoglutarate = UDP-beta-L-threo-pentopyranos-4-ulose + L-glutamate. It functions in the pathway nucleotide-sugar biosynthesis; UDP-4-deoxy-4-formamido-beta-L-arabinose biosynthesis; UDP-4-deoxy-4-formamido-beta-L-arabinose from UDP-alpha-D-glucuronate: step 2/3. It participates in bacterial outer membrane biogenesis; lipopolysaccharide biosynthesis. Catalyzes the conversion of UDP-4-keto-arabinose (UDP-Ara4O) to UDP-4-amino-4-deoxy-L-arabinose (UDP-L-Ara4N). The modified arabinose is attached to lipid A and is required for resistance to polymyxin and cationic antimicrobial peptides. The sequence is that of UDP-4-amino-4-deoxy-L-arabinose--oxoglutarate aminotransferase from Yersinia pseudotuberculosis serotype O:1b (strain IP 31758).